A 782-amino-acid chain; its full sequence is General transcription and DNA repair factor IIH helicase/translocase subunit XPB (782 aa).

Residues 1–11 (MGKRDRADRDK) show a composition bias toward basic and acidic residues. Disordered regions lie at residues 1–51 (MGKR…ESGT) and 218–241 (SAIS…PQGK). The short motif at 6–18 (RADRDKKKSRKRH) is the Nuclear localization signal element. Residues 21–30 (DEEDDEEDAP) show a composition bias toward acidic residues. Polar residues predominate over residues 218-236 (SAISKTAESSGGPSTSRVT). A Helicase ATP-binding domain is found at 327–488 (MFGNGRARSG…DLNFLIGPKL (162 aa)). 340 to 347 (LPCGAGKS) serves as a coordination point for ATP. The DEVH box signature appears at 441–444 (DEVH). A Helicase C-terminal domain is found at 542-702 (RACQFLIKFH…LAGMEEEDLA (161 aa)). A Phosphoserine modification is found at S686. Phosphoserine; by CK2 is present on S751.

It belongs to the helicase family. RAD25/XPB subfamily. As to quaternary structure, component of the 7-subunit TFIIH core complex composed of XPB/ERCC3, XPD/ERCC2, GTF2H1, GTF2H2, GTF2H3, GTF2H4 and GTF2H5, which is active in NER. The core complex associates with the 3-subunit CDK-activating kinase (CAK) module composed of CCNH/cyclin H, CDK7 and MNAT1 to form the 10-subunit holoenzyme (holo-TFIIH) active in transcription. Interacts with PUF60. Interacts with ATF7IP. Interacts with KAT2A; leading to KAT2A recruitment to promoters and acetylation of histones. Part of TBP-based Pol II pre-initiation complex (PIC), in which Pol II core assembles with general transcription factors and other specific initiation factors including GTF2E1, GTF2E2, GTF2F1, GTF2F2, TCEA1, ERCC2, ERCC3, GTF2H2, GTF2H3, GTF2H4, GTF2H5, GTF2A1, GTF2A2, GTF2B and TBP; this large multi-subunit PIC complex mediates DNA unwinding and targets Pol II core to the transcription start site where the first phosphodiester bond forms. Phosphorylation on Ser-751 by CK2 controls the 5'-excision activity of ERCC1-XPF endonuclease; phosphorylated protein inhibits the excision activity and thus NER. Dephosphorylation reactivates the 5'-excision step. Phosphorylation has no effect on transcription or the 3'-5' helicase activity.

It localises to the nucleus. The enzyme catalyses Couples ATP hydrolysis with the unwinding of duplex DNA by translocating in the 3'-5' direction.. It catalyses the reaction ATP + H2O = ADP + phosphate + H(+). With respect to regulation, phosphorylation on Ser-751 by CK2 controls the 5'-excision activity of ERCC1-XPF endonuclease; phosphorylated protein inhibits the excision activity and thus NER. ATPase activity is stimulated by TFIIH subunit p52 (GTF2H4). DNA translocase activity by this subunit in TFIIH is stimulated by XPA, ERCC5/XPG and XFP plus ERCC1. ATP-dependent 3'-5' DNA helicase/translocase; binds dsDNA rather than ssDNA, unzipping it in a translocase rather than classical helicase activity. Component of the general transcription and DNA repair factor IIH (TFIIH) core complex. When complexed to CDK-activating kinase (CAK), involved in RNA transcription by RNA polymerase II. The ATPase activity of XPB/ERCC3, but not its helicase activity, is required for DNA opening; it may wrap around the damaged DNA wedging it open, causing localized melting and twisting that allows XPD/ERCC2 helicase to anchor. The ATP-dependent helicase activity of XPB/ERCC3 may be required for promoter escape. Also involved in transcription-coupled nucleotide excision repair (NER) of damaged DNA. In NER, TFIIH acts by opening DNA around the lesion to allow the excision of the damaged oligonucleotide and its replacement by a new DNA fragment. The structure of the TFIIH transcription complex differs from the NER-TFIIH complex; large movements by XPD/ERCC2 and XPB/ERCC3 are stabilized by XPA. This Pongo abelii (Sumatran orangutan) protein is General transcription and DNA repair factor IIH helicase/translocase subunit XPB (ERCC3).